A 650-amino-acid chain; its full sequence is Glycoprotein 105 (650 aa).

Residues 1-32 (MATARLGVMRPPRSCALIFLCAFSMATAPTNA) traverse the membrane as a helical; Signal-anchor for type II membrane protein segment. The Virion surface segment spans residues 33-650 (TAHRRAGTVK…RFPHVGIGSY (618 aa)). Residues Asn-52, Asn-290, Asn-332, Asn-338, Asn-359, Asn-422, Asn-516, and Asn-552 are each glycosylated (N-linked (GlcNAc...) asparagine; by host).

In terms of assembly, associates with the gp82-gp105 complex. Post-translationally, N-Glycosylated.

The protein resides in the virion membrane. This Homo sapiens (Human) protein is Glycoprotein 105 (U96/U97/U98/U99/U100).